The sequence spans 313 residues: GMP synthase [glutamine-hydrolyzing] subunit B (313 aa).

The GMPS ATP-PPase domain maps to 6 to 190 (KVWEKFIEEK…LGLPEKIYNR (185 aa)). 33 to 39 (SGGVDSS) contacts ATP.

Heterodimer composed of a glutamine amidotransferase subunit (A) and a GMP-binding subunit (B).

It catalyses the reaction XMP + L-glutamine + ATP + H2O = GMP + L-glutamate + AMP + diphosphate + 2 H(+). It participates in purine metabolism; GMP biosynthesis; GMP from XMP (L-Gln route): step 1/1. In terms of biological role, catalyzes the synthesis of GMP from XMP. The polypeptide is GMP synthase [glutamine-hydrolyzing] subunit B (guaAB) (Pyrococcus furiosus (strain ATCC 43587 / DSM 3638 / JCM 8422 / Vc1)).